Reading from the N-terminus, the 406-residue chain is Elongation factor Tu-B (406 aa).

The 206-residue stretch at 10-215 (KPHVNVGTIG…AIDEYIPTPV (206 aa)) folds into the tr-type G domain. The G1 stretch occupies residues 19 to 26 (GHVDHGKT). Position 19–26 (19–26 (GHVDHGKT)) interacts with GTP. Residue T26 participates in Mg(2+) binding. The segment at 61 to 65 (GITIN) is G2. Residues 82 to 85 (DCPG) form a G3 region. GTP-binding positions include 82–86 (DCPGH) and 137–140 (NKVD). The G4 stretch occupies residues 137–140 (NKVD). The G5 stretch occupies residues 175–177 (SAL). T395 carries the post-translational modification Phosphothreonine.

Belongs to the TRAFAC class translation factor GTPase superfamily. Classic translation factor GTPase family. EF-Tu/EF-1A subfamily. As to quaternary structure, monomer. In terms of processing, phosphorylated on a threonine.

The protein resides in the cytoplasm. The catalysed reaction is GTP + H2O = GDP + phosphate + H(+). Functionally, GTP hydrolase that promotes the GTP-dependent binding of aminoacyl-tRNA to the A-site of ribosomes during protein biosynthesis. Its function is as follows. Protects glycyl-tRNA(Gly) from hydrolysis by E.coli D-aminoacyl-tRNA deacylase (dtd). This is Elongation factor Tu-B from Thermus thermophilus (strain ATCC 27634 / DSM 579 / HB8).